A 348-amino-acid chain; its full sequence is Alcohol dehydrogenase 2 (348 aa).

Ser2 is subject to N-acetylserine. Residue Cys44 participates in Zn(2+) binding. Positions 45, 46, and 49 each coordinate NAD(+). His67, Glu68, Cys98, Cys101, Cys104, Cys112, and Cys154 together coordinate Zn(2+). NAD(+) contacts are provided by Gly181, Gly182, Leu183, Asp202, and Lys207. At Ser213 the chain carries Phosphoserine. Phe222 is a binding site for NAD(+). At Thr223 the chain carries Phosphothreonine. Residues Lys226 and Lys234 each participate in a glycyl lysine isopeptide (Lys-Gly) (interchain with G-Cter in ubiquitin) cross-link. Val269 provides a ligand contact to NAD(+). Residue Ser279 is modified to Phosphoserine. Residue Lys287 forms a Glycyl lysine isopeptide (Lys-Gly) (interchain with G-Cter in ubiquitin) linkage. Residues Ser294 and Val296 each coordinate NAD(+). Ser316 carries the post-translational modification Phosphoserine. Residue Lys319 forms a Glycyl lysine isopeptide (Lys-Gly) (interchain with G-Cter in ubiquitin) linkage. Arg341 provides a ligand contact to NAD(+).

It belongs to the zinc-containing alcohol dehydrogenase family. Homotetramer. It depends on Zn(2+) as a cofactor.

The protein localises to the cytoplasm. It catalyses the reaction a primary alcohol + NAD(+) = an aldehyde + NADH + H(+). It carries out the reaction a secondary alcohol + NAD(+) = a ketone + NADH + H(+). The catalysed reaction is ethanol + NAD(+) = acetaldehyde + NADH + H(+). The enzyme catalyses butan-1-ol + NAD(+) = butanal + NADH + H(+). It catalyses the reaction hexan-1-ol + NAD(+) = hexanal + NADH + H(+). Its function is as follows. Preferentially oxidative, glucose-repressed isozyme that catalyzes the conversion of ethanol to acetaldehyde. Main enzyme involved in ethanol consumption. Acts on a variety of primary unbranched aliphatic alcohols. Also produces ethanol from glucose, albeit less than ADH1. This Saccharomyces cerevisiae (strain ATCC 204508 / S288c) (Baker's yeast) protein is Alcohol dehydrogenase 2 (ADH2).